Reading from the N-terminus, the 135-residue chain is Probable 5-hydroxyisourate hydrolase R09H10.3 (135 aa).

Positions 1-20 (MNKFSLFFALTATLMTITES) are cleaved as a signal peptide. 3 residues coordinate substrate: His-30, Arg-68, and Tyr-132.

This sequence belongs to the transthyretin family. 5-hydroxyisourate hydrolase subfamily. As to quaternary structure, homotetramer.

The catalysed reaction is 5-hydroxyisourate + H2O = 5-hydroxy-2-oxo-4-ureido-2,5-dihydro-1H-imidazole-5-carboxylate + H(+). In terms of biological role, catalyzes the hydrolysis of 5-hydroxyisourate (HIU) to 2-oxo-4-hydroxy-4-carboxy-5-ureidoimidazoline (OHCU). The chain is Probable 5-hydroxyisourate hydrolase R09H10.3 from Caenorhabditis elegans.